A 186-amino-acid polypeptide reads, in one-letter code: Lumazine protein (186 aa).

Lumazine-binding repeat units follow at residues 1 to 96 (MFRG…VGRG) and 97 to 186 (GLTG…LNEW).

6,7-dimethyl-8-(1-D-ribityl)lumazine serves as cofactor.

Antenna protein that modulates the color of the bioluminescence emission of the luciferase. In the presence of LumP, luciferase emission is shifted to higher energy values (shorter wavelength). The chain is Lumazine protein (lumP) from Photobacterium leiognathi.